We begin with the raw amino-acid sequence, 136 residues long: uncharacterized protein (136 aa).

This is an uncharacterized protein from Mycoplasma pneumoniae (strain ATCC 29342 / M129 / Subtype 1) (Mycoplasmoides pneumoniae).